A 233-amino-acid polypeptide reads, in one-letter code: uncharacterized protein (233 aa).

Over residues 1-10 (MSSKLSKKKL) the composition is skewed to basic residues. A disordered region spans residues 1 to 90 (MSSKLSKKKL…KRQKGKNNDR (90 aa)). The segment covering 11–56 (KSLEYRSKKFDKKSQSLEEHEKKVQQKNEELEKKAADKISRDELPE) has biased composition (basic and acidic residues). Residues 76-85 (KTLKSKRQKG) show a composition bias toward basic residues. An RRM domain is found at 92–171 (VILFVGNLPK…RKINIELTAG (80 aa)). Basic and acidic residues-rich tracts occupy residues 194-216 (MRQRVASEEQQAGEEKMARKAVA) and 224-233 (IHPDRLRLLQ). The interval 194-233 (MRQRVASEEQQAGEEKMARKAVADEGLESGIHPDRLRLLQ) is disordered.

It localises to the nucleus. The protein localises to the nucleolus. This is an uncharacterized protein from Schizosaccharomyces pombe (strain 972 / ATCC 24843) (Fission yeast).